The chain runs to 246 residues: AA9 family lytic polysaccharide monooxygenase D (246 aa).

An N-terminal signal peptide occupies residues 1–19 (MHLLSLLFPVIALIPTVLS). Histidine 20 lines the Cu(2+) pocket. A disulfide bridge links cysteine 78 with cysteine 196. N-linked (GlcNAc...) asparagine glycans are attached at residues asparagine 86, asparagine 141, and asparagine 156. O2 is bound by residues histidine 182 and glutamine 191. Tyrosine 193 is a binding site for Cu(2+). Asparagine 235 carries an N-linked (GlcNAc...) asparagine glycan.

The protein belongs to the polysaccharide monooxygenase AA9 family. Cu(2+) serves as cofactor.

The protein localises to the secreted. It carries out the reaction [(1-&gt;4)-beta-D-glucosyl]n+m + reduced acceptor + O2 = 4-dehydro-beta-D-glucosyl-[(1-&gt;4)-beta-D-glucosyl]n-1 + [(1-&gt;4)-beta-D-glucosyl]m + acceptor + H2O.. In terms of biological role, lytic polysaccharide monooxygenase (LPMO) that depolymerizes crystalline and amorphous polysaccharides via the oxidation of scissile alpha- or beta-(1-4)-glycosidic bonds, yielding C1 and C4 oxidation products. Catalysis by LPMOs requires the reduction of the active-site copper from Cu(II) to Cu(I) by a reducing agent and H(2)O(2) or O(2) as a cosubstrate. The chain is AA9 family lytic polysaccharide monooxygenase D from Botryotinia fuckeliana (strain B05.10) (Noble rot fungus).